The sequence spans 192 residues: Protein GrpE (192 aa).

Belongs to the GrpE family. As to quaternary structure, homodimer.

The protein localises to the cytoplasm. Its function is as follows. Participates actively in the response to hyperosmotic and heat shock by preventing the aggregation of stress-denatured proteins, in association with DnaK and GrpE. It is the nucleotide exchange factor for DnaK and may function as a thermosensor. Unfolded proteins bind initially to DnaJ; upon interaction with the DnaJ-bound protein, DnaK hydrolyzes its bound ATP, resulting in the formation of a stable complex. GrpE releases ADP from DnaK; ATP binding to DnaK triggers the release of the substrate protein, thus completing the reaction cycle. Several rounds of ATP-dependent interactions between DnaJ, DnaK and GrpE are required for fully efficient folding. This is Protein GrpE from Neisseria gonorrhoeae (strain NCCP11945).